A 514-amino-acid polypeptide reads, in one-letter code: Citrate synthase 2, peroxisomal (514 aa).

Active-site residues include histidine 324, histidine 363, and aspartate 419.

It belongs to the citrate synthase family. Widely expressed. Expressed throughout the shoot. Expressed in flower, silique, stem, cauline leaf, young leaf, mature leaf and senescent leaf.

It localises to the peroxisome. The catalysed reaction is oxaloacetate + acetyl-CoA + H2O = citrate + CoA + H(+). Its pathway is carbohydrate metabolism; tricarboxylic acid cycle; isocitrate from oxaloacetate: step 1/2. Peroxisomal citrate synthase required for the fatty acid respiration in seedlings, citrate being exported from peroxisomes into mitochondria during respiration of triacylglycerol (TAG). Indeed, complete respiration requires the transfer of carbon in the form of citrate from the peroxisome to the mitochondria. This chain is Citrate synthase 2, peroxisomal (CSY2), found in Arabidopsis thaliana (Mouse-ear cress).